Here is a 262-residue protein sequence, read N- to C-terminus: Tropinone reductase homolog At2g29290 (262 aa).

13 to 37 (LVTGGTKGIGEAVVEELSILGARVH) is a binding site for NADP(+). Ser-146 lines the substrate pocket. Catalysis depends on Tyr-159, which acts as the Proton acceptor.

The protein belongs to the short-chain dehydrogenases/reductases (SDR) family. SDR65C subfamily.

In Arabidopsis thaliana (Mouse-ear cress), this protein is Tropinone reductase homolog At2g29290.